The chain runs to 1749 residues: Kinase non-catalytic C-lobe domain-containing protein 1 (1749 aa).

Positions 37-217 (VSLADILSLR…QDVSESSWRE (181 aa)) constitute a KIND 1 domain. Disordered stretches follow at residues 210–275 (VSES…SHSR) and 361–435 (CRLW…ARQL). 2 stretches are compositionally biased toward basic and acidic residues: residues 363-373 (LWPEQEPEHQL) and 410-430 (ADPR…RIPE). In terms of domain architecture, KIND 2 spans 444-608 (VSLQDLLSQL…RASICQVYQE (165 aa)). Disordered stretches follow at residues 689 to 871 (ARDQ…RPAD) and 962 to 1061 (QASP…GGAS). Residues 702-717 (ERGGQREGEGEEKLSL) show a composition bias toward basic and acidic residues. 2 stretches are compositionally biased toward low complexity: residues 739–748 (QGAAPEPLGA) and 766–779 (PANQ…AAPG). Residues 823–833 (HGPRHPPKPPR) are compositionally biased toward basic residues. Residues 853–871 (GERDDQSPDSVPERPRPAD) are compositionally biased toward basic and acidic residues. Serine 964 is modified (phosphoserine). Over residues 980–990 (SQSPRSPSSKR) the composition is skewed to low complexity. Residues 1005-1019 (RTSSRAPCSPTSVSD) are compositionally biased toward polar residues. The span at 1040-1056 (VKAERAQQPEAGEDRRP) shows a compositional bias: basic and acidic residues. Residues 1133-1190 (QQLMMEKRNYRKTLKFYQKLLQKEKRNKGSDVKTMLSKLKGQLEEMKSRVQFLSLVKK) are a coiled coil. The N-terminal Ras-GEF domain occupies 1246-1371 (KARILQAGTP…HLLGLLEVGM (126 aa)). Residues 1468–1719 (STHQLFSQLT…SGADISTLAA (252 aa)) form the Ras-GEF domain.

In terms of assembly, interacts (via KIND2) with MAP2; the interaction enhances MAP2 phosphorylation and localizes KNDC1 to dendrites. In terms of tissue distribution, expressed specifically in the cerebral cortex.

The protein resides in the cell projection. The protein localises to the dendrite. It localises to the perikaryon. RAS-Guanine nucleotide exchange factor (GEF) that controls the negative regulation of neuronal dendrite growth by mediating a signaling pathway linking RAS and MAP2. May be involved in cellular senescence. In Homo sapiens (Human), this protein is Kinase non-catalytic C-lobe domain-containing protein 1.